Reading from the N-terminus, the 808-residue chain is Zinc finger protein 841 (808 aa).

Lys137 is covalently cross-linked (Glycyl lysine isopeptide (Lys-Gly) (interchain with G-Cter in SUMO2)). A C2H2-type 1; degenerate zinc finger spans residues 145–167; sequence YIGNECGKAFRVSSSLINHQMIH. The C2H2-type 2; degenerate zinc-finger motif lies at 173-195; that stretch reads YRCNESGKAFHRGSLLTVHQIVH. 13 C2H2-type zinc fingers span residues 201–223, 229–251, 257–279, 285–307, 313–335, 341–363, 369–391, 397–419, 425–447, 453–475, 481–503, 509–531, and 537–559; these read YQCD…RRSH, YICN…QRIH, YKCN…QTVH, YKCN…HIIH, YTCD…QIIH, YKCN…RRIH, YKCN…QRVH, YKCN…QRIH, YKCN…MRCH, LHCN…QRMH, YKCN…RRSH, FQCN…RKIH, and YKCN…LVIH. Glycyl lysine isopeptide (Lys-Gly) (interchain with G-Cter in SUMO2) cross-links involve residues Lys554 and Lys579. The C2H2-type 16; degenerate zinc-finger motif lies at 565–587; it reads YHCNEFGEAFIQSSKLARYHRNP. 7 C2H2-type zinc fingers span residues 593–615, 621–643, 649–671, 677–699, 705–727, 733–755, and 761–783; these read HKCS…QRRH, YKCI…RRIH, YKCN…WSIH, YKCN…QMMH, YKCN…QRNH, YKCM…QRIH, and YKCN…QIKH. Residue Lys791 forms a Glycyl lysine isopeptide (Lys-Gly) (interchain with G-Cter in SUMO2) linkage.

It belongs to the krueppel C2H2-type zinc-finger protein family.

Its subcellular location is the nucleus. Functionally, may be involved in transcriptional regulation. The protein is Zinc finger protein 841 (ZNF841) of Homo sapiens (Human).